Consider the following 156-residue polypeptide: Protein UXT (156 aa).

The protein belongs to the UXT family. In terms of assembly, homohexamer. Component of the PAQosome complex which is responsible for the biogenesis of several protein complexes and which consists of R2TP complex members RUVBL1, RUVBL2, RPAP3 and PIH1D1, URI complex members PFDN2, PFDN6, PDRG1, UXT and URI1 as well as ASDURF, POLR2E and DNAAF10/WDR92. Interacts with LRPPRC. Interacts with androgen receptor AR (via N-terminus). Interacts with estrogen receptor ESR1; the interaction relocalizes ESR1 to the cytoplasm. In the nucleus, interacts specifically with RELA (via RHD domain) and forms a dynamic complex with NF-kappa-B and is recruited to the NF-kappa-B enhanceosome upon stimulation. Interacts with MECOM. Interacts with URI1.

The protein resides in the cytoplasm. It is found in the nucleus. Its subcellular location is the cytoskeleton. The protein localises to the microtubule organizing center. It localises to the centrosome. The protein resides in the spindle pole. In terms of biological role, involved in gene transcription regulation. Acts in concert with the corepressor URI1 to regulate androgen receptor AR-mediated transcription. Together with URI1, associates with chromatin to the NKX3-1 promoter region. Negatively regulates the transcriptional activity of the estrogen receptor ESR1 by inducing its translocation into the cytoplasm. May act as nuclear chaperone that facilitates the formation of the NF-kappa-B enhanceosome and thus positively regulates NF-kappa-B transcription activity. Potential component of mitochondrial-associated LRPPRC, a multidomain organizer that potentially integrates mitochondria and the microtubular cytoskeleton with chromosome remodeling. Increasing concentrations of UXT contributes to progressive aggregation of mitochondria and cell death potentially through its association with LRPPRC. Suppresses cell transformation and it might mediate this function by interaction and inhibition of the biological activity of cell proliferation and survival stimulatory factors like MECOM. This is Protein UXT (UXT) from Bos taurus (Bovine).